A 168-amino-acid chain; its full sequence is Ribosome maturation factor RimP (168 aa).

It belongs to the RimP family.

It is found in the cytoplasm. Functionally, required for maturation of 30S ribosomal subunits. In Bordetella bronchiseptica (strain ATCC BAA-588 / NCTC 13252 / RB50) (Alcaligenes bronchisepticus), this protein is Ribosome maturation factor RimP.